Consider the following 96-residue polypeptide: Conglutin delta 4 (96 aa).

The N-terminal stretch at 1–22 (MARLTILIAFVAALVLVVHTSA) is a signal peptide. Disulfide bonds link cysteine 29–cysteine 78 and cysteine 80–cysteine 91.

Belongs to the 2S seed storage albumins family.

The protein localises to the endoplasmic reticulum. This is Conglutin delta 4 from Lupinus angustifolius (Narrow-leaved blue lupine).